Consider the following 188-residue polypeptide: Phosphoribosylglycinamide formyltransferase (188 aa).

12–14 is a binding site for N(1)-(5-phospho-beta-D-ribosyl)glycinamide; sequence GSN. (6R)-10-formyltetrahydrofolate-binding positions include Lys-66, 91 to 94, and Asn-108; that span reads MRLV. Catalysis depends on His-110, which acts as the Proton donor.

It belongs to the GART family.

The catalysed reaction is N(1)-(5-phospho-beta-D-ribosyl)glycinamide + (6R)-10-formyltetrahydrofolate = N(2)-formyl-N(1)-(5-phospho-beta-D-ribosyl)glycinamide + (6S)-5,6,7,8-tetrahydrofolate + H(+). Its pathway is purine metabolism; IMP biosynthesis via de novo pathway; N(2)-formyl-N(1)-(5-phospho-D-ribosyl)glycinamide from N(1)-(5-phospho-D-ribosyl)glycinamide (10-formyl THF route): step 1/1. In terms of biological role, catalyzes the transfer of a formyl group from 10-formyltetrahydrofolate to 5-phospho-ribosyl-glycinamide (GAR), producing 5-phospho-ribosyl-N-formylglycinamide (FGAR) and tetrahydrofolate. This chain is Phosphoribosylglycinamide formyltransferase, found in Staphylococcus epidermidis (strain ATCC 35984 / DSM 28319 / BCRC 17069 / CCUG 31568 / BM 3577 / RP62A).